The primary structure comprises 740 residues: Copalyl diphosphate synthase 2 (740 aa).

Lys154 provides a ligand contact to substrate. 2 residues coordinate Mg(2+): Asp287 and Asp289. The DXDD motif motif lies at 287–290 (DADD). Lys373 contacts substrate.

It belongs to the terpene synthase family. Mg(2+) is required as a cofactor.

The enzyme catalyses (2E,6E,10E)-geranylgeranyl diphosphate = (+)-copalyl diphosphate. Its pathway is secondary metabolite biosynthesis; terpenoid biosynthesis. Monofunctional diterpene synthase converting geranylgeranyl diphosphate to copalyl diphosphate. The protein is Copalyl diphosphate synthase 2 (CPS2) of Selaginella moellendorffii (Spikemoss).